A 207-amino-acid chain; its full sequence is Probable HTH-type transcriptional regulator YttP (207 aa).

Residues 3-63 (VSTKDKIIES…HLVSEFYEGY (61 aa)) form the HTH tetR-type domain. The H-T-H motif DNA-binding region spans 26–45 (SVREIAKSADVNVAHISYYF).

The sequence is that of Probable HTH-type transcriptional regulator YttP (yttP) from Bacillus subtilis (strain 168).